Reading from the N-terminus, the 651-residue chain is MPSRSISAPVPVLAPAPIVSSLVPAAPSGHQNKTTRIFPPFVVAGAGAGFSLFITLSVCFCKFSRKRSSPPAENASSSPRRPSPREFSYSSLRRATGSFSQANRLGQGGFGVVFRGTISGGENVAVKVMDSGSLQGEGEFQNELFFAAKLDSPHVVPVIGFSHDRKRRRLLLVYKLMDNGNLQDALLHRRCPELMDWNRRFLVAVNIADGIKHLHSLEPPVIHGDIKPSNVLLDSLFSAKIADFGLARLKAEQVEISVAPERDGDGSMVEEVESVVTTVTGYEDFNFGLVDQSPESVAKVPGSVSASPEATTVVSVSPEMGEKTDEDGGSVVVMKKGKESESKDWWWKQESNVERGRVKEYVMQWIGSEVKKERPSRSDWIEAAALSSSSSKKLEKKTSKRLDWWLSLEEEDENKKKKKRRMVREWWKDEYRRELAKKRKKKKKMTLEAEFCSDDGSSSVSQWRRGSGSGSSIDWWLDGLSGERWLRARGNSHDSVSGEIAKSCGISSTPSMRGTVCYAAPEYCNLDNNVSEKCDVYSYGVLLLVLISGRRPLEMTGSASEIQRANLMSWARKLARRGKLVDLVDQKLQNLDQEQAVLCIKVALLCLQRLPISRPSMKEVLGMLKGEVNLPELPSEFSPSPPLKTTRKQRR.

Residues 1–25 (MPSRSISAPVPVLAPAPIVSSLVPA) form the signal peptide. Over 26–40 (APSGHQNKTTRIFPP) the chain is Extracellular. Asn32 carries N-linked (GlcNAc...) asparagine glycosylation. A helical membrane pass occupies residues 41–61 (FVVAGAGAGFSLFITLSVCFC). Residues 62 to 651 (KFSRKRSSPP…PLKTTRKQRR (590 aa)) lie on the Cytoplasmic side of the membrane. The disordered stretch occupies residues 66–87 (KRSSPPAENASSSPRRPSPREF). Residues 69–87 (SPPAENASSSPRRPSPREF) are compositionally biased toward low complexity. The Protein kinase domain maps to 99-633 (FSQANRLGQG…LKGEVNLPEL (535 aa)). Residues 105 to 113 (LGQGGFGVV) and Lys127 contribute to the ATP site. Asp225 serves as the catalytic Proton acceptor.

It belongs to the protein kinase superfamily. Ser/Thr protein kinase family.

The protein localises to the cell membrane. The enzyme catalyses L-seryl-[protein] + ATP = O-phospho-L-seryl-[protein] + ADP + H(+). It carries out the reaction L-threonyl-[protein] + ATP = O-phospho-L-threonyl-[protein] + ADP + H(+). The polypeptide is Receptor-like serine/threonine-protein kinase At4g25390 (Arabidopsis thaliana (Mouse-ear cress)).